Here is a 1023-residue protein sequence, read N- to C-terminus: 2-oxoglutarate dehydrogenase complex component E1 (1023 aa).

Residues 1-40 (MFHLRTCAAKLRPLTASQTVKTFSQNRPAAARTFQQIRCY) constitute a mitochondrion transit peptide. Lysine 74 is subject to N6-succinyllysine. A Phosphoserine modification is found at serine 100. Ca(2+)-binding residues include histidine 143, aspartate 156, and aspartate 158. A thiamine diphosphate-binding site is contributed by arginine 312. Position 401 is an N6-acetyllysine (lysine 401). 3 residues coordinate thiamine diphosphate: aspartate 411, asparagine 444, and isoleucine 446. The Mg(2+) site is built by aspartate 411, asparagine 444, and isoleucine 446. A Glycyl lysine isopeptide (Lys-Gly) (interchain with G-Cter in ubiquitin) cross-link involves residue lysine 534. The residue at position 564 (lysine 564) is an N6-succinyllysine. Residue glutamine 676 coordinates thiamine diphosphate. Lysine 970 is modified (N6-acetyllysine).

It belongs to the alpha-ketoglutarate dehydrogenase family. As to quaternary structure, homodimer. The 2-oxoglutarate dehydrogenase complex is composed of OGDH (2-oxoglutarate dehydrogenase; E1), DLST (dihydrolipoamide succinyltransferase; E2), DLD (dihydrolipoamide dehydrogenase; E3), and the assembly factor KGD4. It contains multiple copies of the three enzymatic components (E1, E2 and E3). In the nucleus, the 2-oxoglutarate dehydrogenase complex associates with KAT2A. Interacts with ABHD11; this interaction maintains the functional lipoylation of the 2-oxoglutarate dehydrogenase complex. It depends on thiamine diphosphate as a cofactor. Mg(2+) serves as cofactor.

The protein localises to the mitochondrion. Its subcellular location is the nucleus. It carries out the reaction N(6)-[(R)-lipoyl]-L-lysyl-[protein] + 2-oxoglutarate + H(+) = N(6)-[(R)-S(8)-succinyldihydrolipoyl]-L-lysyl-[protein] + CO2. Calcium ions and ADP stimulate, whereas ATP and NADH reduce catalytic activity. Its function is as follows. 2-oxoglutarate dehydrogenase (E1o) component of the 2-oxoglutarate dehydrogenase complex (OGDHC). Participates in the first step, rate limiting for the overall conversion of 2-oxoglutarate to succinyl-CoA and CO(2) catalyzed by the whole OGDHC. Catalyzes the irreversible decarboxylation of 2-oxoglutarate (alpha-ketoglutarate) via the thiamine diphosphate (ThDP) cofactor and subsequent transfer of the decarboxylated acyl intermediate on an oxidized dihydrolipoyl group that is covalently amidated to the E2 enzyme (dihydrolipoyllysine-residue succinyltransferase or DLST). Plays a key role in the Krebs (citric acid) cycle, which is a common pathway for oxidation of fuel molecules, including carbohydrates, fatty acids, and amino acids. Can catalyze the decarboxylation of 2-oxoadipate in vitro, but at a much lower rate than 2-oxoglutarate. Mainly active in the mitochondrion. A fraction of the 2-oxoglutarate dehydrogenase complex also localizes in the nucleus and is required for lysine succinylation of histones: associates with KAT2A on chromatin and provides succinyl-CoA to histone succinyltransferase KAT2A. The polypeptide is 2-oxoglutarate dehydrogenase complex component E1 (Homo sapiens (Human)).